Consider the following 860-residue polypeptide: Alanine--tRNA ligase (860 aa).

Residues His-553, His-557, Cys-655, and His-659 each contribute to the Zn(2+) site.

It belongs to the class-II aminoacyl-tRNA synthetase family. It depends on Zn(2+) as a cofactor.

Its subcellular location is the cytoplasm. The enzyme catalyses tRNA(Ala) + L-alanine + ATP = L-alanyl-tRNA(Ala) + AMP + diphosphate. Its function is as follows. Catalyzes the attachment of alanine to tRNA(Ala) in a two-step reaction: alanine is first activated by ATP to form Ala-AMP and then transferred to the acceptor end of tRNA(Ala). Also edits incorrectly charged Ser-tRNA(Ala) and Gly-tRNA(Ala) via its editing domain. The sequence is that of Alanine--tRNA ligase from Legionella pneumophila (strain Lens).